We begin with the raw amino-acid sequence, 231 residues long: dTTP/UTP pyrophosphatase (231 aa).

Asp-85 serves as the catalytic Proton acceptor.

The protein belongs to the Maf family. YhdE subfamily. Requires a divalent metal cation as cofactor.

The protein resides in the cytoplasm. It catalyses the reaction dTTP + H2O = dTMP + diphosphate + H(+). It carries out the reaction UTP + H2O = UMP + diphosphate + H(+). In terms of biological role, nucleoside triphosphate pyrophosphatase that hydrolyzes dTTP and UTP. May have a dual role in cell division arrest and in preventing the incorporation of modified nucleotides into cellular nucleic acids. This is dTTP/UTP pyrophosphatase from Psychrobacter arcticus (strain DSM 17307 / VKM B-2377 / 273-4).